Reading from the N-terminus, the 594-residue chain is Protein wntless (594 aa).

Residues 1-13 (MSGTILENLSGRK) are Cytoplasmic-facing. The chain crosses the membrane as a helical span at residues 14–34 (LSILVATLLLCQVLCFLLGGL). Over 35–239 (YAPLPAGHVT…AIHQNGGFTQ (205 aa)) the chain is Lumenal. Residue N58 is glycosylated (N-linked (GlcNAc...) asparagine). The helical transmembrane segment at 240-260 (IWLLLKTMLFPFVVGIMIWFW) threads the bilayer. Topologically, residues 261–270 (RRVHLLQRSP) are cytoplasmic. The chain crosses the membrane as a helical span at residues 271–291 (ALLEYMLIYLGAALTFLNLPL). Residues 292–311 (EYLSLVYEMPYMLLLSDIRQ) lie on the Lumenal side of the membrane. A helical transmembrane segment spans residues 312 to 332 (GIFYAMLLTFWLVFAGEHMLI). Topologically, residues 333–344 (QDAPNKSTIRSR) are cytoplasmic. The chain crosses the membrane as a helical span at residues 345-365 (YWKHLSAVVVGCISLFVFDIC). Over 366–390 (ERGVQLRNPFYSIWTTPLGAKVAMT) the chain is Lumenal. A helical membrane pass occupies residues 391–411 (FIVLAGVSAAIYFLFLCYMIW). At 412–473 (KVFRNIGDKR…ANESKGLIYR (62 aa)) the chain is on the cytoplasmic side. A helical transmembrane segment spans residues 474–494 (FKFLMLATLVCAALTVAGFIM). Over 495-514 (GQMAEGQWDWNDNVAIQPTS) the chain is Lumenal. Residues 515 to 535 (AFLTGVYGMWNIYIFALLILY) form a helical membrane-spanning segment. Residues 536-594 (APSHKQWPTMHHSDETTQSNENIVASAASEEIEFSHLPSDSNPSEISSLTSFTRKVAFD) lie on the Cytoplasmic side of the membrane. Positions 571–594 (HLPSDSNPSEISSLTSFTRKVAFD) are disordered. The segment covering 573-588 (PSDSNPSEISSLTSFT) has biased composition (polar residues).

The protein belongs to the wntless family. Interacts with wg; in the Golgi. Interacts with Vps35, a component of the retromer complex; wls stability is regulated by Vps35. As to expression, ubiquitously expressed in the wing imaginal disk, increased expression is observed in a stripe at the dorso-ventral boundary and other regions of the wing disk that express wg. Also expresses in the leg imaginal disk. During larval development, expression is seen in both motorneurons and muscle.

The protein localises to the presynaptic cell membrane. The protein resides in the postsynaptic cell membrane. It localises to the cell membrane. It is found in the endosome membrane. Its subcellular location is the endoplasmic reticulum membrane. The protein localises to the golgi apparatus membrane. Functionally, a segment polarity gene required for wingless (wg)-dependent patterning processes, acting in both wg-sending cells and wg-target cells. In non-neuronal cells wls directs wg secretion. The wls traffic loop encompasses the Golgi, the cell surface, an endocytic compartment and a retrograde route leading back to the Golgi, and involves clathrin-mediated endocytosis and the retromer complex (a conserved protein complex consisting of Vps35 and Vps26). In neuronal cells (the larval motorneuron NMJ), the wg signal moves across the synapse via the release of wls-containing exosome-like vesicles. Postsynaptic wls is required for the trafficking of fz2 through the fz2-interacting protein Grip. The sequence is that of Protein wntless from Drosophila melanogaster (Fruit fly).